The primary structure comprises 318 residues: Cobalamin biosynthesis protein CobD (318 aa).

A run of 5 helical transmembrane segments spans residues 56–76 (VLWLLVVGITWLVSWGFLWLM), 78–98 (EINPWLGWLAQVWMIYTLLAG), 153–173 (VDGVIAPLFFLMLGGAPLAMA), 204–224 (LANWLPARLSWVLLSAAAWLI), and 298–318 (MMASLLALLLFALTHLLLVGI).

The protein belongs to the CobD/CbiB family.

The protein localises to the cell membrane. The protein operates within cofactor biosynthesis; adenosylcobalamin biosynthesis. In terms of biological role, converts cobyric acid to cobinamide by the addition of aminopropanol on the F carboxylic group. This chain is Cobalamin biosynthesis protein CobD, found in Yersinia enterocolitica serotype O:8 / biotype 1B (strain NCTC 13174 / 8081).